We begin with the raw amino-acid sequence, 944 residues long: Isoleucine--tRNA ligase (944 aa).

The 'HIGH' region signature appears at 58–68 (PYANGSIHIGH). Position 563 (glutamate 563) interacts with L-isoleucyl-5'-AMP. The 'KMSKS' region signature appears at 604–608 (KMSKS). Lysine 607 is a binding site for ATP. The Zn(2+) site is built by cysteine 907, cysteine 910, cysteine 927, and cysteine 930.

It belongs to the class-I aminoacyl-tRNA synthetase family. IleS type 1 subfamily. As to quaternary structure, monomer. Zn(2+) serves as cofactor.

It is found in the cytoplasm. It carries out the reaction tRNA(Ile) + L-isoleucine + ATP = L-isoleucyl-tRNA(Ile) + AMP + diphosphate. Catalyzes the attachment of isoleucine to tRNA(Ile). As IleRS can inadvertently accommodate and process structurally similar amino acids such as valine, to avoid such errors it has two additional distinct tRNA(Ile)-dependent editing activities. One activity is designated as 'pretransfer' editing and involves the hydrolysis of activated Val-AMP. The other activity is designated 'posttransfer' editing and involves deacylation of mischarged Val-tRNA(Ile). This chain is Isoleucine--tRNA ligase, found in Salmonella typhimurium (strain LT2 / SGSC1412 / ATCC 700720).